Here is a 347-residue protein sequence, read N- to C-terminus: (RS)-norcoclaurine 6-O-methyltransferase (347 aa).

S-adenosyl-L-methionine-binding residues include glycine 192, aspartate 215, aspartate 235, methionine 236, and lysine 249. Histidine 253 serves as the catalytic Proton acceptor.

Belongs to the class I-like SAM-binding methyltransferase superfamily. Cation-independent O-methyltransferase family. COMT subfamily. Homodimer.

The enzyme catalyses norcoclaurine + S-adenosyl-L-methionine = coclaurine + S-adenosyl-L-homocysteine + H(+). It functions in the pathway alkaloid biosynthesis; (S)-reticuline biosynthesis; (S)-reticuline from (S)-norcoclaurine: step 1/4. Catalyzes the transfer of the S-methyl group of S-adenosyl-L-methionine (AdoMet) to the 6-hydroxyl group of norcoclaurine to form coclaurine. The sequence is that of (RS)-norcoclaurine 6-O-methyltransferase from Coptis japonica (Japanese goldthread).